A 145-amino-acid polypeptide reads, in one-letter code: Large ribosomal subunit protein uL13 (145 aa).

It belongs to the universal ribosomal protein uL13 family. In terms of assembly, part of the 50S ribosomal subunit.

This protein is one of the early assembly proteins of the 50S ribosomal subunit, although it is not seen to bind rRNA by itself. It is important during the early stages of 50S assembly. The sequence is that of Large ribosomal subunit protein uL13 from Exiguobacterium sibiricum (strain DSM 17290 / CCUG 55495 / CIP 109462 / JCM 13490 / 255-15).